Here is a 285-residue protein sequence, read N- to C-terminus: Steroidogenic acute regulatory protein, mitochondrial (285 aa).

The N-terminal 63 residues, 1–63, are a transit peptide targeting the mitochondrion; sequence MLLATFKLCA…RRGSLLGSQL (63 aa). Phosphoserine; by PKA occurs at positions 57 and 195. In terms of domain architecture, START spans 67-280; the sequence is LYSDQELAYI…LRKRLESCPA (214 aa).

In terms of assembly, may interact with TSPO. In terms of tissue distribution, corpus luteum and adrenal gland.

The protein localises to the mitochondrion. The enzyme catalyses cholesterol(in) = cholesterol(out). It participates in steroid metabolism; cholesterol metabolism. Its function is as follows. Plays a key role in steroid hormone synthesis by enhancing the metabolism of cholesterol into pregnenolone. Mediates the transfer of cholesterol from the outer mitochondrial membrane to the inner mitochondrial membrane where it is cleaved to pregnenolone. The protein is Steroidogenic acute regulatory protein, mitochondrial (STAR) of Bos taurus (Bovine).